The following is a 799-amino-acid chain: DISARM protein DrmE (799 aa).

It is found in the cytoplasm. In terms of biological role, component of antiviral defense system DISARM (defense island system associated with restriction-modification), composed of DrmE, DrmA, DrmB, DrmC and DrmMII. DISARM is probably a multi-gene restriction module, this subunit has an unknown function. Expression of DISARM in B.subtilis (strain BEST7003) confers resistance to phages Nf, phi29, phi105, phi3T, SPO1, SPR and SPP1. Protection is over 10(7)-fold against phi3T, 10(4)-10(5)-fold against Nf, phi29, phi105 and SPR, 100-fold against SPO1 and 10-fold against SPP1. DISARM does not interfere with phage adsorption, but instead interferes with (phi3T) DNA replication early in its cycle, preventing replication, circularization and lysogeny and probably causes phage DNA degradation (DNA is degraded in SPP1-infected cells). In Bacillus paralicheniformis (strain ATCC 9945a / NCIMB 11709 / CD-2), this protein is DISARM protein DrmE.